The primary structure comprises 480 residues: MTLIRTVLMAAALLGASAHAQGVVGKPFGFAAGTTGGGNAAPAAPSDIKELAQWLSDDTPRVILIDKEFDFTGSEGTCADCACCVPSSNTCGSSGQNAIETSFGWCGSSPNVTCTYDKAGTKGMDVGSDKSIVGVGSAGVIRGKGLRLTGGASNVIIQNIHITDINPEYIWGGDAISLDGTDKIWIDHVKISLVGRQMFVTGYESSGSVTISNSEFDGRTSWSASCDGHHYWTLLGLGKNEQITFARNYIHHTSGRSPKLGESSYWHSYNNYWSDNSGHAFDVESAGKSLIEGNVFSNVKTPLTKENLDGVFAVSADDESTCSGSLGRSCIPNVLTSSGELSSAGDGVFSGWLSDEGDLTLMPASQVASYVKAHAGVGKLGAGDYSSSAIPSSTPAPSSSALAKRHGGHDRHGLGHIPHLTEGGPGAWHTPGPAPSWSWRTIGVRSTALPTPSPSSSSCAIGKPTAGPPRFPIFGDLGIF.

The signal sequence occupies residues 1 to 25 (MTLIRTVLMAAALLGASAHAQGVVG). A disulfide bridge connects residues Cys-83 and Cys-106. A glycan (N-linked (GlcNAc...) asparagine) is linked at Asn-111. Arg-256 is a catalytic residue. Cysteines 322 and 330 form a disulfide. The span at 386–401 (SSSAIPSSTPAPSSSA) shows a compositional bias: low complexity. The tract at residues 386–436 (SSSAIPSSTPAPSSSALAKRHGGHDRHGLGHIPHLTEGGPGAWHTPGPAPS) is disordered.

The protein belongs to the polysaccharide lyase 1 family.

The protein resides in the secreted. The enzyme catalyses Eliminative cleavage of (1-&gt;4)-alpha-D-galacturonan methyl ester to give oligosaccharides with 4-deoxy-6-O-methyl-alpha-D-galact-4-enuronosyl groups at their non-reducing ends.. Functionally, pectinolytic enzymes consist of four classes of enzymes: pectin lyase, polygalacturonase, pectin methylesterase and rhamnogalacturonase. Among pectinolytic enzymes, pectin lyase is the most important in depolymerization of pectin, since it cleaves internal glycosidic bonds of highly methylated pectins. The protein is Probable pectin lyase F-2 (pelF-2) of Aspergillus terreus (strain NIH 2624 / FGSC A1156).